Reading from the N-terminus, the 364-residue chain is Aminomethyltransferase (364 aa).

The protein belongs to the GcvT family. In terms of assembly, the glycine cleavage system is composed of four proteins: P, T, L and H.

The enzyme catalyses N(6)-[(R)-S(8)-aminomethyldihydrolipoyl]-L-lysyl-[protein] + (6S)-5,6,7,8-tetrahydrofolate = N(6)-[(R)-dihydrolipoyl]-L-lysyl-[protein] + (6R)-5,10-methylene-5,6,7,8-tetrahydrofolate + NH4(+). In terms of biological role, the glycine cleavage system catalyzes the degradation of glycine. This chain is Aminomethyltransferase, found in Salmonella paratyphi C (strain RKS4594).